The primary structure comprises 757 residues: Dapper homolog 2 (757 aa).

Residues 1–281 are inhibition of Nodal signaling; sequence MWAPSGQGPA…QSPLFALPKE (281 aa). Residues 55 to 107 are a coiled coil; that stretch reads RGQELRLEAALTALREQLSRLRRQDAGLKTHLDQLDQQISELQLDVSRSSCEA. Disordered regions lie at residues 486 to 540, 584 to 684, and 696 to 728; these read RRRV…CSES, RWQS…EGCF, and AEAG…PPVP. Basic and acidic residues-rich tracts occupy residues 505–516 and 631–644; these read ERQRVTERDPSR and ACAR…EHSA. The segment covering 645-656 has biased composition (polar residues); sequence DCTSLYHSTIAE. Over residues 664-673 the composition is skewed to basic and acidic residues; sequence SDHTANRFGD. Positions 754-757 match the PDZ-binding motif; it reads MTMV.

The protein belongs to the dapper family. As to quaternary structure, can form homodimers and heterodimers with DACT1 or DACT3. Interacts with CSNK1D, PKA catalytic subunit, PKC-type kinase, CSNK2B, DVL1, DVL2, DVL3, VANGL1, VANGL2, TGFBR1, CTNNB1, CTNND2, CTNND1, LEF1, TCF7, TCF7L1 and HDAC1. In terms of tissue distribution, expressed in kidney (inner medullary collecting duct). Expressed in epidermal keratinocytes and hair follicles.

Functionally, involved in regulation of intracellular signaling pathways during development. Negatively regulates the Nodal signaling pathway, possibly by promoting the lysosomal degradation of Nodal receptors, such as TGFBR1. May be involved in control of the morphogenetic behavior of kidney ureteric bud cells by keeping cells epithelial and restraining their mesenchymal character. May play an inhibitory role in the re-epithelialization of skin wounds by attenuating TGF-beta signaling. In Mus musculus (Mouse), this protein is Dapper homolog 2 (Dact2).